The chain runs to 489 residues: Rhamnulokinase (489 aa).

13 to 17 is a binding site for ATP; sequence ASSGR. The cysteines at positions 68 and 222 are disulfide-linked. Residues G83 and 236–238 contribute to the substrate site; that span reads HDT. D237 functions as the Proton acceptor in the catalytic mechanism. T259 provides a ligand contact to ATP. N296 is a substrate binding site. Q304 is an ATP binding site. An intrachain disulfide couples C353 to C370. G402 lines the ATP pocket. C413 and C417 form a disulfide bridge.

It belongs to the rhamnulokinase family. Mg(2+) is required as a cofactor.

It carries out the reaction L-rhamnulose + ATP = L-rhamnulose 1-phosphate + ADP + H(+). It functions in the pathway carbohydrate degradation; L-rhamnose degradation; glycerone phosphate from L-rhamnose: step 2/3. In terms of biological role, involved in the catabolism of L-rhamnose (6-deoxy-L-mannose). Catalyzes the transfer of the gamma-phosphate group from ATP to the 1-hydroxyl group of L-rhamnulose to yield L-rhamnulose 1-phosphate. This Salmonella agona (strain SL483) protein is Rhamnulokinase.